Consider the following 532-residue polypeptide: O-phosphoserine--tRNA(Cys) ligase (532 aa).

Residues His-186–Thr-188, Ser-231–Ser-233, Tyr-273–Tyr-274, and Asn-317 contribute to the substrate site.

It belongs to the class-II aminoacyl-tRNA synthetase family. O-phosphoseryl-tRNA(Cys) synthetase subfamily. Homotetramer. Interacts with SepCysS.

The catalysed reaction is tRNA(Cys) + O-phospho-L-serine + ATP = O-phospho-L-seryl-tRNA(Cys) + AMP + diphosphate. In terms of biological role, catalyzes the attachment of O-phosphoserine (Sep) to tRNA(Cys). The sequence is that of O-phosphoserine--tRNA(Cys) ligase from Methanothermobacter thermautotrophicus (strain ATCC 29096 / DSM 1053 / JCM 10044 / NBRC 100330 / Delta H) (Methanobacterium thermoautotrophicum).